Consider the following 364-residue polypeptide: 2-oxoadipate dioxygenase/decarboxylase, chloroplastic/amyloplastic (364 aa).

A chloroplast-targeting transit peptide spans 1-49 (MAVALAGARSPGAGAILSLRRLAPAAAAPVRLGGSGTPGTRRRRGIAMA). H107 and R111 together coordinate 2-oxoadipate. H107 lines the Fe(2+) pocket. H243 provides a ligand contact to Fe(2+). Q289 and Y313 together coordinate 2-oxoadipate. Position 315 (E315) interacts with Fe(2+).

The protein belongs to the 2-oxoadipate dioxygenase/decarboxylase family. It depends on Fe(2+) as a cofactor. Expressed in roots, stems, leaf sheaths, leaf blades, panicles, and endosperm.

The protein resides in the plastid. The protein localises to the chloroplast. Its subcellular location is the amyloplast. It carries out the reaction 2-oxoadipate + O2 = (R)-2-hydroxyglutarate + CO2. It functions in the pathway amino-acid degradation. Its function is as follows. Catalyzes the decarboxylation and hydroxylation of 2-oxoadipate (2OA) to form D-2-hydroxyglutarate (D-2-HGA). Is involved in a D-lysine catabolic pathway. Involved in the regulation of starch synthesis and amyloplast development within the peripheral endosperm during the grain-filling stage. This chain is 2-oxoadipate dioxygenase/decarboxylase, chloroplastic/amyloplastic, found in Oryza sativa subsp. japonica (Rice).